We begin with the raw amino-acid sequence, 258 residues long: Adenylate kinase (258 aa).

Position 52–57 (52–57 (GAGKGT)) interacts with ATP. The segment at 72-101 (ATGDMLRSQVAKKTELGKEAKKIMDQGGLV) is NMP. Residues Thr-73, Arg-78, 99-101 (GLV), 128-131 (GFPR), and Gln-135 contribute to the AMP site. An LID region spans residues 169 to 206 (GRLVHPASGRSYHKVFNPPKQEMKDDITGEPLIQRSDD). ATP-binding positions include Arg-170 and 179 to 180 (SY). 2 residues coordinate AMP: Arg-203 and Arg-214. Gln-242 is an ATP binding site.

Belongs to the adenylate kinase family. AK2 subfamily. In terms of assembly, monomer.

Its subcellular location is the cytoplasm. It is found in the cytosol. The protein localises to the mitochondrion intermembrane space. The enzyme catalyses AMP + ATP = 2 ADP. Functionally, catalyzes the reversible transfer of the terminal phosphate group between ATP and AMP. Plays an important role in cellular energy homeostasis and in adenine nucleotide metabolism. Adenylate kinase activity is critical for regulation of the phosphate utilization and the AMP de novo biosynthesis pathways. The sequence is that of Adenylate kinase (adk1) from Aspergillus oryzae (strain ATCC 42149 / RIB 40) (Yellow koji mold).